Here is a 124-residue protein sequence, read N- to C-terminus: Small ribosomal subunit protein uS12 (124 aa).

At Asp89 the chain carries 3-methylthioaspartic acid. A disordered region spans residues 104 to 124 (TAGVENRKQSRSKYGAKRPKK). The segment covering 112–124 (QSRSKYGAKRPKK) has biased composition (basic residues).

It belongs to the universal ribosomal protein uS12 family. Part of the 30S ribosomal subunit. Contacts proteins S8 and S17. May interact with IF1 in the 30S initiation complex.

Functionally, with S4 and S5 plays an important role in translational accuracy. Its function is as follows. Interacts with and stabilizes bases of the 16S rRNA that are involved in tRNA selection in the A site and with the mRNA backbone. Located at the interface of the 30S and 50S subunits, it traverses the body of the 30S subunit contacting proteins on the other side and probably holding the rRNA structure together. The combined cluster of proteins S8, S12 and S17 appears to hold together the shoulder and platform of the 30S subunit. In Pseudothermotoga lettingae (strain ATCC BAA-301 / DSM 14385 / NBRC 107922 / TMO) (Thermotoga lettingae), this protein is Small ribosomal subunit protein uS12.